The following is a 246-amino-acid chain: 3-deoxy-manno-octulosonate cytidylyltransferase (246 aa).

It belongs to the KdsB family. In terms of assembly, homodimer.

It localises to the cytoplasm. The enzyme catalyses 3-deoxy-alpha-D-manno-oct-2-ulosonate + CTP = CMP-3-deoxy-beta-D-manno-octulosonate + diphosphate. It functions in the pathway nucleotide-sugar biosynthesis; CMP-3-deoxy-D-manno-octulosonate biosynthesis; CMP-3-deoxy-D-manno-octulosonate from 3-deoxy-D-manno-octulosonate and CTP: step 1/1. The protein operates within bacterial outer membrane biogenesis; lipopolysaccharide biosynthesis. Functionally, activates KDO (a required 8-carbon sugar) for incorporation into bacterial lipopolysaccharide in Gram-negative bacteria. This chain is 3-deoxy-manno-octulosonate cytidylyltransferase (kpsU), found in Escherichia coli.